The sequence spans 208 residues: Proheparin-binding EGF-like growth factor (208 aa).

The first 19 residues, 1–19 (MKLLPSVVLKLFLAAVLSA), serve as a signal peptide directing secretion. Residues 20–62 (LVTGESLERLRRGLAAGTSNPDPPTVSTDQLLPLGGGRDRKVR) constitute a propeptide, or 72, or 73, or 76, or 81. Residues 20–160 (LVTGESLERL…ENRLYTYDHT (141 aa)) lie on the Extracellular side of the membrane. A disordered region spans residues 33-56 (LAAGTSNPDPPTVSTDQLLPLGGG). The span at 36 to 49 (GTSNPDPPTVSTDQ) shows a compositional bias: polar residues. Thr-37 carries O-linked (GalNAc...) threonine glycosylation. Ser-38 carries O-linked (GalNAc...) serine glycosylation. Thr-44, Thr-47, Thr-75, and Thr-85 each carry an O-linked (GalNAc...) threonine glycan. The tract at residues 82 to 104 (ALATPNKEEHGKRKKKGKGLGKK) is disordered. Basic residues predominate over residues 93–102 (KRKKKGKGLG). An EGF-like domain is found at 104 to 144 (KRDPCLRKYKDFCIHGECKYVKELRAPSCICHPGYHGERCH). 3 disulfides stabilise this stretch: Cys-108–Cys-121, Cys-116–Cys-132, and Cys-134–Cys-143. Residues 149–208 (PVENRLYTYDHTTILAVVAVVLSSVCLLVIVGLLMFRYHRRGGYDVENEEKVKLGMTNSH) constitute a propeptide, C-terminal. Residues 161 to 184 (TILAVVAVVLSSVCLLVIVGLLMF) traverse the membrane as a helical segment. Residues 185–208 (RYHRRGGYDVENEEKVKLGMTNSH) lie on the Cytoplasmic side of the membrane.

In terms of assembly, interacts with FBLN1. Interacts with EGFR and ERBB4. In terms of processing, several N-termini have been identified by direct sequencing. The forms with N-termini 63, 73 and 74 have been tested and found to be biologically active. Post-translationally, O-glycosylated with core 1 or possibly core 8 glycans. Thr-47 is a minor glycosylation site compared to Thr-44.

It localises to the secreted. The protein resides in the extracellular space. Its subcellular location is the cell membrane. Growth factor that mediates its effects via EGFR, ERBB2 and ERBB4. Required for normal cardiac valve formation and normal heart function. Promotes smooth muscle cell proliferation. May be involved in macrophage-mediated cellular proliferation. It is mitogenic for fibroblasts, but not endothelial cells. It is able to bind EGF receptor/EGFR with higher affinity than EGF itself and is a far more potent mitogen for smooth muscle cells than EGF. Also acts as a diphtheria toxin receptor. The protein is Proheparin-binding EGF-like growth factor (HBEGF) of Homo sapiens (Human).